The sequence spans 766 residues: Ubiquitin carboxyl-terminal hydrolase creB (766 aa).

Residues 1 to 32 (MGSFLKSFRKDVGSAAPSVGAPPAKKEPQPLP) are disordered. The segment covering 13–23 (GSAAPSVGAPP) has biased composition (low complexity). A USP domain is found at 55–466 (YGMENFGNTC…CAYVLFYQET (412 aa)). Cys64 acts as the Nucleophile in catalysis. 2 disordered regions span residues 115–145 (EALA…KDSP) and 243–266 (ESPQ…SRTP). The span at 249–263 (SDVSDSVIPSSSSGS) shows a compositional bias: low complexity. The active-site Proton acceptor is His417. The tract at residues 526–752 (APTAPQLSTH…HDRSSHGKWR (227 aa)) is disordered. Positions 548–572 (SPAPDPAPLTSLPPIPPIPETPPAP) are enriched in pro residues. The stretch at 573–620 (LTSRKSDLQSKKERVKEEKERKAAEKEKEKQRRKEIETRLKDRQRRED) forms a coiled coil. 2 stretches are compositionally biased toward basic and acidic residues: residues 576–643 (RKSD…RNHA) and 734–747 (EQEH…DRSS).

The protein belongs to the peptidase C19 family. As to quaternary structure, interacts with creA, creC and qutD.

It catalyses the reaction Thiol-dependent hydrolysis of ester, thioester, amide, peptide and isopeptide bonds formed by the C-terminal Gly of ubiquitin (a 76-residue protein attached to proteins as an intracellular targeting signal).. Ubiquitin thioesterase component of the regulatory network controlling carbon source utilization through ubiquitination and deubiquitination involving creA, creB, creC, creD and acrB. Deubiquitinates the creA catabolic repressor and the quinate permease qutD. Also plays a role in response to carbon starvation and the control of extracellular proteases activity. This chain is Ubiquitin carboxyl-terminal hydrolase creB (creB), found in Emericella nidulans (strain FGSC A4 / ATCC 38163 / CBS 112.46 / NRRL 194 / M139) (Aspergillus nidulans).